The primary structure comprises 220 residues: MNAFVASVAPIAVAGSATLSSAVCAQKKAFFGAQVAAKKTTFEAAPARFIVRAEEEEAAPAEKVEKKAAAPKPFSVPTLNLNAPTPIFGGSTGGLLRKAEVEEFYSITWTGKSETVFELPTGGAAIMRAGENLLRLARKEQCIALGAQLKDKFKITDYKIYRVYPSGEVQFLHPKDGVFPEKVNPGRVAVGSNKRRIGQNPDPAKLKFKGQETFDSDLKL.

The N-terminal 53 residues, 1–53 (MNAFVASVAPIAVAGSATLSSAVCAQKKAFFGAQVAAKKTTFEAAPARFIVRA), are a transit peptide targeting the cyanelle. The tract at residues 192-220 (SNKRRIGQNPDPAKLKFKGQETFDSDLKL) is disordered. Residues 209–220 (KGQETFDSDLKL) are compositionally biased toward basic and acidic residues.

Belongs to the PsaD family.

Its subcellular location is the plastid. It localises to the cyanelle thylakoid membrane. PsaD can form complexes with ferredoxin and ferredoxin-oxidoreductase in photosystem I (PS I) reaction center. PSAD may encode the ferredoxin-docking protein. This chain is Photosystem I reaction center subunit II, cyanelle (psaD), found in Cyanophora paradoxa.